The chain runs to 263 residues: Kallikrein 1-related peptidase b24 (263 aa).

An N-terminal signal peptide occupies residues 1-17; it reads MWFLILFLALSLGGIDA. The propeptide at 18-24 is activation peptide; it reads APPVQSR. Residues 25–260 enclose the Peptidase S1 domain; it reads VVGGFKCEKN…FASWIKDTMA (236 aa). Disulfide bonds link Cys31/Cys175, Cys50/Cys66, Cys154/Cys221, Cys186/Cys200, and Cys211/Cys236. His65 serves as the catalytic Charge relay system. N-linked (GlcNAc...) asparagine glycosylation is found at Asn69 and Asn105. The Charge relay system role is filled by Asp122. The N-linked (GlcNAc...) asparagine glycan is linked to Asn185. Residue Ser215 is the Charge relay system of the active site.

It belongs to the peptidase S1 family. Kallikrein subfamily.

It carries out the reaction Preferential cleavage of Arg-|-Xaa bonds in small molecule substrates. Highly selective action to release kallidin (lysyl-bradykinin) from kininogen involves hydrolysis of Met-|-Xaa or Leu-|-Xaa.. Glandular kallikreins cleave Met-Lys and Arg-Ser bonds in kininogen to release Lys-bradykinin. The protein is Kallikrein 1-related peptidase b24 (Klk1b24) of Mus musculus (Mouse).